Here is a 466-residue protein sequence, read N- to C-terminus: Cysteine--tRNA ligase (466 aa).

C27 is a Zn(2+) binding site. A 'HIGH' region motif is present at residues 29–39; it reads PTVYDDAHLGH. Residues C208, H238, and E242 each contribute to the Zn(2+) site. The short motif at 270-274 is the 'KMSKS' region element; that stretch reads KMSKS. K273 contributes to the ATP binding site.

The protein belongs to the class-I aminoacyl-tRNA synthetase family. Monomer. Zn(2+) is required as a cofactor.

Its subcellular location is the cytoplasm. The catalysed reaction is tRNA(Cys) + L-cysteine + ATP = L-cysteinyl-tRNA(Cys) + AMP + diphosphate. This Sulfurimonas denitrificans (strain ATCC 33889 / DSM 1251) (Thiomicrospira denitrificans (strain ATCC 33889 / DSM 1251)) protein is Cysteine--tRNA ligase.